Consider the following 950-residue polypeptide: MQLLLKSIFTCALFVIFVYATAQSLLKVQETEARQAYLNVTSSSSSNLSQDDGHFLSRRLRQVSHGEEGDEGAPSQMDDELEQMTKVHGEAPDAEELRECSEGLVLPLWMPQRNISVGDRLVRGFVYFVLLIYLFVGVSIIADRFMAAIEAITSIERAVVVKGPNNTKQVMHVRIWNETVANLTLMALGSSAPEILLSVIEIYAKDFESGDLGPGTIVGSAAYNLFMIIAVCMIWIPAGEVRRIRHLRVFFVTALFSVFAYVWLWLILSVFTPGVILVWEAIVTLLFFPLTVLWAYIAERRLLVYKYMDKNYRVNKRGTVVAGEHDQVEMDAEKGPKQPMVTSARGNDAEAFDEARREYITLLTELRQKYPDADLEQLEMMAQEQVLARSSKSRAFYRIQATRKMVGSGNLMRKIQERAHSDLTEVKAQLHAGDDEEADDPIRMYFEPGHYTVMENCGEFEVRVVRRGDISTYASVEYETQDGTASAGTDFVGRKGLLSFPPGVDEQRFRIEVIDDDVFEEDECFYIRLFNPSEGVKLAVPMIATVMILDDDHAGIFAFTDSVFEITESVGRFELKVMRYSGARGTVIVPYWTENDTATESKDYEGARGELVFENNESEKFIDLFILEESSYEKDVSFKVHIGEPRLAPDDELAAKIKEVEKKPVQDLTELDRILLLSKPRNGELTTAYVRIRESQEFKATVDKLVAKANVSAVLGTSSWKEQFKDALTVIPADESEFDNDDEEEEVPSCFSYVSHFVCLFWKVLFAFVPPTDICGGYVTFVVSIFVIGVITAIIGDAASYFGCALNIKDSVTAILFVALGTSIPDTFASMIAAKHDEGADNCIGNVTGSNAVNVFLGIGLAWTIAAVYHSSHGMTFNVEPGTIGFAVALFCGEALIAIMLIMFRRWHKGIGAELGGPKVSKYISAAILVFLWVFYVVICILEAYDVIRV.

The signal sequence occupies residues 1–22 (MQLLLKSIFTCALFVIFVYATA). Residues 23 to 120 (QSLLKVQETE…PQRNISVGDR (98 aa)) are Extracellular-facing. N-linked (GlcNAc...) asparagine glycosylation is found at Asn-39, Asn-47, and Asn-114. The helical transmembrane segment at 121 to 141 (LVRGFVYFVLLIYLFVGVSII) threads the bilayer. Topologically, residues 142-179 (ADRFMAAIEAITSIERAVVVKGPNNTKQVMHVRIWNET) are cytoplasmic. Residues 180-200 (VANLTLMALGSSAPEILLSVI) traverse the membrane as a helical segment. At 201-216 (EIYAKDFESGDLGPGT) the chain is on the extracellular side. The helical transmembrane segment at 217 to 237 (IVGSAAYNLFMIIAVCMIWIP) threads the bilayer. Residues 238-257 (AGEVRRIRHLRVFFVTALFS) are Cytoplasmic-facing. 2 helical membrane passes run 258–278 (VFAY…VILV) and 279–299 (WEAI…YIAE). At 300 to 749 (RRLLVYKYMD…NDDEEEEVPS (450 aa)) the chain is on the cytoplasmic side. Residues 301–318 (RLLVYKYMDKNYRVNKRG) form a corresponds to the exchanger inhibitory peptide (XIP) found in other sodium/calcium exchange proteins and thought to be involved in calmodulin binding region. The Calx-beta 1 domain maps to 440–551 (DPIRMYFEPG…MIATVMILDD (112 aa)). The Ca(2+) site is built by Glu-455, Asp-490, Asp-515, Asp-516, Val-518, Glu-520, Glu-523, Asp-550, Asp-551, and Asp-552. The Calx-beta 2 domain occupies 555–694 (GIFAFTDSVF…LTTAYVRIRE (140 aa)). Residues 750 to 770 (CFSYVSHFVCLFWKVLFAFVP) form a helical membrane-spanning segment. Topologically, residues 771–775 (PTDIC) are extracellular. A helical membrane pass occupies residues 776 to 796 (GGYVTFVVSIFVIGVITAIIG). At 797–813 (DAASYFGCALNIKDSVT) the chain is on the cytoplasmic side. Residues 814–834 (AILFVALGTSIPDTFASMIAA) form a helical membrane-spanning segment. Residues 835–848 (KHDEGADNCIGNVT) lie on the Extracellular side of the membrane. Asn-846 carries an N-linked (GlcNAc...) asparagine glycan. A helical membrane pass occupies residues 849 to 869 (GSNAVNVFLGIGLAWTIAAVY). The Cytoplasmic segment spans residues 870–883 (HSSHGMTFNVEPGT). A helical membrane pass occupies residues 884–904 (IGFAVALFCGEALIAIMLIMF). Topologically, residues 905 to 923 (RRWHKGIGAELGGPKVSKY) are extracellular. Residues 924 to 944 (ISAAILVFLWVFYVVICILEA) form a helical membrane-spanning segment. The Cytoplasmic portion of the chain corresponds to 945 to 950 (YDVIRV).

This sequence belongs to the Ca(2+):cation antiporter (CaCA) (TC 2.A.19) family. SLC8 subfamily. Ubiquitously expressed with higher expression in head compared to body (at protein level). Enriched in photoreceptor cells of the eye (at protein level). In the adult head, expressed in retina, optic ganglia and all neuronal tissues.

It localises to the cell membrane. The protein resides in the cell projection. Its subcellular location is the rhabdomere membrane. The catalysed reaction is Ca(2+)(in) + 3 Na(+)(out) = Ca(2+)(out) + 3 Na(+)(in). With respect to regulation, activated by a Na(+) electrochemical gradient but also undergoes Na(2+)-dependent inactivation. Inhibited by micromolar levels of cytoplasmic Ca(2+), which is the opposite of most characterized mammalian homologs. Exhibits greater extent of inhibition by Ca(2+) than isoform D/1.2. Its activity is regulated as follows. Exhibits greater Na(2+)-dependent inactivation than isoform A/1.1, probably due to greater stability of the inactive Na(2+)-bound form. Na(+)/Ca(2+) antiporter that couples the energy of a Na(+) electrochemical gradient to the movement of Ca(2+) against an electrochemical gradient across a membrane, which contributes to the regulation of cytoplasmic Ca(2+) levels. Mediates Na(+)/Ca(2+) exchange in photoreceptor cells and involved in controlling Ca(2+) levels during phototransduction, affecting magnitude of the photoresponse, activation kinetics, signal amplification, response termination, and light adaptation. Light induced depolarization of photoreceptor cells, resulting in Na(+) and Ca(2+) entry through trp/transient receptor potential protein channels, is essential for photoreceptor cell function but may result in toxic levels of cytoplasmic Ca(2+). Na(+)/Ca(2+) antiporter regulation of Ca(2+) levels protects photoreceptor cells from light-dependent retinal degeneration. This Drosophila melanogaster (Fruit fly) protein is Sodium/calcium exchanger Calx.